The primary structure comprises 208 residues: MLAKDSLSWVVTVVTLTGIFLTAAVLTGIDLVWYLFYMSLFLTFFVIWFFRDPDRTTRICDHCMFSAADGKVMDVSGRRVCVFMNVHNVHVNRTPISGVVKSITHKKGGYLPAFHKDSERNERTVTVIKSSHGEVNVTQIAGVMVRRIVSYINVGDELVNGEKIGMIRFGSRVDVTIPDDFDIACKVGDRVYAGETVIAKKKNFKVRK.

Residue Ser-171 is the Schiff-base intermediate with substrate; via pyruvic acid of the active site. At Ser-171 the chain carries Pyruvic acid (Ser); by autocatalysis.

Belongs to the phosphatidylserine decarboxylase family. PSD-A subfamily. Heterodimer of a large membrane-associated beta subunit and a small pyruvoyl-containing alpha subunit. Pyruvate is required as a cofactor. In terms of processing, is synthesized initially as an inactive proenzyme. Formation of the active enzyme involves a self-maturation process in which the active site pyruvoyl group is generated from an internal serine residue via an autocatalytic post-translational modification. Two non-identical subunits are generated from the proenzyme in this reaction, and the pyruvate is formed at the N-terminus of the alpha chain, which is derived from the carboxyl end of the proenzyme. The post-translation cleavage follows an unusual pathway, termed non-hydrolytic serinolysis, in which the side chain hydroxyl group of the serine supplies its oxygen atom to form the C-terminus of the beta chain, while the remainder of the serine residue undergoes an oxidative deamination to produce ammonia and the pyruvoyl prosthetic group on the alpha chain.

It is found in the cell membrane. The enzyme catalyses archaetidylserine + H(+) = archaetidylethanolamine + CO2. Functionally, catalyzes the formation of archaetidylethanolamine (PtdEtn) from archaetidylserine (PtdSer). This Methanococcoides burtonii (strain DSM 6242 / NBRC 107633 / OCM 468 / ACE-M) protein is Putative archaetidylserine decarboxylase proenzyme.